A 677-amino-acid chain; its full sequence is Nuclear fusion protein FUS2 (677 aa).

Thr20 is subject to Phosphothreonine. A phosphoserine mark is found at Ser67, Ser72, and Ser84. Position 88 is a phosphothreonine (Thr88). Residues Ser100 and Ser106 each carry the phosphoserine modification. The 215-residue stretch at 112–326 (KFYKIVQEFY…KYSLFSNKLE (215 aa)) folds into the DH domain.

It is found in the cell tip. Functionally, promotes cell fusion during zygote formation. The sequence is that of Nuclear fusion protein FUS2 (FUS2) from Saccharomyces cerevisiae (strain ATCC 204508 / S288c) (Baker's yeast).